The primary structure comprises 299 residues: MGLTSILIAQVLFLGAANSAVVKRWPCSVSPTGPTDPSVAKNCGYWVNDVAKNDQCADLEGYFDISREELVNWNPSLKENCRLQNGHSYCVAASDLTTRSTDSAEEASRMDMATGVEAADLPSPTQGGLAANCNAFYKVKTGDSCWSIINDFGNFSIYDFYRWNPSVGQSCEALYPDYYVCIGVQEQEPPVATPTNPPGPVLSGTPANCNKYHKVLSGDNCWAIANQYGISLDQFYSWNPAVKPTSCQSLLPDYYVCVGVAETPSATATPQPTPQPQQSSSPDQPMPQPILSRLLRILL.

Residues 1–19 (MGLTSILIAQVLFLGAANS) form the signal peptide. LysM domains lie at 46 to 91 (WVND…SYCV), 135 to 182 (AFYK…YVCI), and 211 to 258 (KYHK…YVCV). N-linked (GlcNAc...) asparagine glycosylation occurs at N154. Residues 266 to 283 (ATATPQPTPQPQQSSSPD) show a composition bias toward low complexity. Residues 266-288 (ATATPQPTPQPQQSSSPDQPMPQ) are disordered.

Belongs to the secreted LysM effector family.

It is found in the secreted. It localises to the cell wall. The protein resides in the extracellular space. Its subcellular location is the extracellular matrix. Cell wall chitin of A.fumigatus recruits lung eosinophils during infection and ldpB might have a role in sequestration of chitin and act as triggers of host immunity to dampen host defense. This chain is Secreted LysM effector ldpB, found in Aspergillus fumigatus (strain ATCC MYA-4609 / CBS 101355 / FGSC A1100 / Af293) (Neosartorya fumigata).